A 95-amino-acid polypeptide reads, in one-letter code: Aspartyl/glutamyl-tRNA(Asn/Gln) amidotransferase subunit C (95 aa).

The protein belongs to the GatC family. Heterotrimer of A, B and C subunits.

The enzyme catalyses L-glutamyl-tRNA(Gln) + L-glutamine + ATP + H2O = L-glutaminyl-tRNA(Gln) + L-glutamate + ADP + phosphate + H(+). It carries out the reaction L-aspartyl-tRNA(Asn) + L-glutamine + ATP + H2O = L-asparaginyl-tRNA(Asn) + L-glutamate + ADP + phosphate + 2 H(+). Functionally, allows the formation of correctly charged Asn-tRNA(Asn) or Gln-tRNA(Gln) through the transamidation of misacylated Asp-tRNA(Asn) or Glu-tRNA(Gln) in organisms which lack either or both of asparaginyl-tRNA or glutaminyl-tRNA synthetases. The reaction takes place in the presence of glutamine and ATP through an activated phospho-Asp-tRNA(Asn) or phospho-Glu-tRNA(Gln). This Methylobacillus flagellatus (strain ATCC 51484 / DSM 6875 / VKM B-1610 / KT) protein is Aspartyl/glutamyl-tRNA(Asn/Gln) amidotransferase subunit C.